A 296-amino-acid chain; its full sequence is MLENLATEERNKKTIDLDKLSPKEILMVMNEEDAGVTTAIKKELSKIEKIVNGVTESFRKGGRLIYLGAGTSGRLGVLDAAECVPTFGVSKEQVIGLISGGEKAFVSAVEGAEDSLSLGKQDLEKINLVKDDFVIGIAASGRTPYVIGALDYARLIGAKTAAISCNANAEISAHADIQVEIVTGAEVLTGSTRLKAGTAQKLVLNMISTTSMVGIGKVYKNLMVDVLPTNKKLEERSKRIIMEATDVDYETASKFYEEAEKHVKVAIVMILTNSHKEEALNNLKKANGFVRNTIQK.

An SIS domain is found at 54-217 (VTESFRKGGR…STTSMVGIGK (164 aa)). The Proton donor role is filled by Glu-82. Glu-113 is an active-site residue.

This sequence belongs to the GCKR-like family. MurNAc-6-P etherase subfamily. Homodimer.

The catalysed reaction is N-acetyl-D-muramate 6-phosphate + H2O = N-acetyl-D-glucosamine 6-phosphate + (R)-lactate. Its pathway is amino-sugar metabolism; N-acetylmuramate degradation. Specifically catalyzes the cleavage of the D-lactyl ether substituent of MurNAc 6-phosphate, producing GlcNAc 6-phosphate and D-lactate. This is N-acetylmuramic acid 6-phosphate etherase from Listeria welshimeri serovar 6b (strain ATCC 35897 / DSM 20650 / CCUG 15529 / CIP 8149 / NCTC 11857 / SLCC 5334 / V8).